The sequence spans 428 residues: Flotillin-1 (428 aa).

A phosphoserine mark is found at S19, S163, and S385. T387 is subject to Phosphothreonine.

This sequence belongs to the band 7/mec-2 family. Flotillin subfamily. Heterooligomeric complex of flotillin-1 and flotillin-2 and caveolin-1 and caveolin-2. Interacts with ECPAS. In terms of tissue distribution, high expression in brain, white adipose tissue, heart muscle, skeletal muscle and lung. Low expression in spleen, liver and testis.

The protein resides in the cell membrane. The protein localises to the endosome. Its subcellular location is the membrane. It localises to the caveola. It is found in the melanosome. The protein resides in the membrane raft. In terms of biological role, may act as a scaffolding protein within caveolar membranes, functionally participating in formation of caveolae or caveolae-like vesicles. This Mus musculus (Mouse) protein is Flotillin-1 (Flot1).